Consider the following 188-residue polypeptide: Elongation factor P (188 aa).

It belongs to the elongation factor P family.

It is found in the cytoplasm. It functions in the pathway protein biosynthesis; polypeptide chain elongation. Involved in peptide bond synthesis. Stimulates efficient translation and peptide-bond synthesis on native or reconstituted 70S ribosomes in vitro. Probably functions indirectly by altering the affinity of the ribosome for aminoacyl-tRNA, thus increasing their reactivity as acceptors for peptidyl transferase. This is Elongation factor P from Aeromonas salmonicida (strain A449).